A 127-amino-acid chain; its full sequence is Evasin-4 (127 aa).

The N-terminal stretch at 1 to 23 (MAFKYWFVFAAVLYARQWLSTKC) is a signal peptide. 4 disulfides stabilise this stretch: cysteine 50–cysteine 69, cysteine 65–cysteine 112, cysteine 86–cysteine 117, and cysteine 107–cysteine 126. Asparagine 54, asparagine 64, asparagine 70, asparagine 77, asparagine 83, asparagine 106, and asparagine 114 each carry an N-linked (GlcNAc...) asparagine glycan.

This sequence belongs to the evasin C8 family. Monomer.

The protein localises to the secreted. In terms of biological role, salivary chemokine-binding protein which has chemokine-neutralizing activity and binds to host chemokines CCL1, CCL3, CCL5, CCL7, CCL8, CCL11, CCL14, CCL15, CCL16, CCL17, CCL18, CCL19, CCL21, CCL22, CCL23, CCL24, CCL25 and CCL26 with nanomolar affinity. Binds to CCL3 and CCL5 with 1:1 stoichiometry. Although binding to CCL25 is observed, does not inhibit CCL25-induced chemotaxis. Has been shown to reduce cardiac injury and inflammation in mice through its anti-CCL5 activity. The sequence is that of Evasin-4 from Rhipicephalus sanguineus (Brown dog tick).